The following is a 554-amino-acid chain: Glucose-6-phosphate isomerase (554 aa).

Glu358 (proton donor) is an active-site residue. Active-site residues include His389 and Lys515.

The protein belongs to the GPI family.

It localises to the cytoplasm. The enzyme catalyses alpha-D-glucose 6-phosphate = beta-D-fructose 6-phosphate. Its pathway is carbohydrate biosynthesis; gluconeogenesis. It functions in the pathway carbohydrate degradation; glycolysis; D-glyceraldehyde 3-phosphate and glycerone phosphate from D-glucose: step 2/4. Its function is as follows. Catalyzes the reversible isomerization of glucose-6-phosphate to fructose-6-phosphate. In Mycobacterium leprae (strain Br4923), this protein is Glucose-6-phosphate isomerase.